The primary structure comprises 459 residues: Argininosuccinate lyase (459 aa).

Belongs to the lyase 1 family. Argininosuccinate lyase subfamily.

Its subcellular location is the cytoplasm. It catalyses the reaction 2-(N(omega)-L-arginino)succinate = fumarate + L-arginine. It functions in the pathway amino-acid biosynthesis; L-arginine biosynthesis; L-arginine from L-ornithine and carbamoyl phosphate: step 3/3. This Methylobacterium radiotolerans (strain ATCC 27329 / DSM 1819 / JCM 2831 / NBRC 15690 / NCIMB 10815 / 0-1) protein is Argininosuccinate lyase.